Here is a 495-residue protein sequence, read N- to C-terminus: 3-octaprenyl-4-hydroxybenzoate carboxy-lyase (495 aa).

Asparagine 171 contacts Mn(2+). Prenylated FMN is bound by residues 174–176 (IYR), 188–190 (RWL), and 193–194 (RG). Glutamate 237 contributes to the Mn(2+) binding site. The active-site Proton donor is the aspartate 286.

This sequence belongs to the UbiD family. Homohexamer. Requires prenylated FMN as cofactor. Mn(2+) is required as a cofactor.

It localises to the cell membrane. The enzyme catalyses a 4-hydroxy-3-(all-trans-polyprenyl)benzoate + H(+) = a 2-(all-trans-polyprenyl)phenol + CO2. Its pathway is cofactor biosynthesis; ubiquinone biosynthesis. Catalyzes the decarboxylation of 3-octaprenyl-4-hydroxy benzoate to 2-octaprenylphenol, an intermediate step in ubiquinone biosynthesis. This Hamiltonella defensa subsp. Acyrthosiphon pisum (strain 5AT) protein is 3-octaprenyl-4-hydroxybenzoate carboxy-lyase.